The primary structure comprises 341 residues: G2/mitotic-specific cyclin C13-1 (341 aa).

Belongs to the cyclin family. Cyclin AB subfamily.

Its function is as follows. Essential for the control of the cell cycle at the G2/M (mitosis) transition. Interacts with the CDC2 and CDK2 protein kinases to form MPF. G2/M cyclins accumulate steadily during G2 and are abruptly destroyed at mitosis. This chain is G2/mitotic-specific cyclin C13-1, found in Daucus carota (Wild carrot).